Here is a 951-residue protein sequence, read N- to C-terminus: MLGSMARKKPRNTSRLPLALNPLKSKDVLAVLAERNEAIVPVGAWVEPASPGSSEIPAYTSAYLIEEELKEQLRKKQEALKHFQKQVKYRVNQQIRLRKKQQLQKSYERAQKEGSIAMQSSATHLTSKRTSVFPNNLNVAIGSSRLPPSLMPGDGIEDEENQNELFQQQAQALSETMKQARHRLASFKTVIKKKGSVFPDDGRKSFLTREEVLSRKPASTGINTGIRGELPIKVHQGLLAAVPYQNYMENQELDYEEPDYEESSSLVTDEKGKEDLFGRGQQDQQAIHSEDKNKPFSRVQKVKFKNPLFVLMEEEEQKQLHFEGLQDILPEAQDYFLEAQGDLLETQGDLTGIQSVKPDTQAVEMKVQVTEPEGQAIEPEGQPIKTETQGIMLKAQSIELEEGSIVLKTQDFLPTNQALLTKNQDVLLKDHCVLPKDQSILLKYQDQDFLPRDQHVLHKDQDILPKYQDQNFLPKDQNFLSRDQHVLPKDQDILPKYQDQNFLPKDQNFLSRDQHVLPKDQNILPKYQGQDFLPKDQDFLSRDQHVLPKDWNILPKCQDQDFLPRDQGVLPKDQNILPICQDQDFLPRDQGYLPKDQNILPICQDRDFLPRDLHVLSNDQNILPKCQDQDFLPKYQKVHFKEPYSDMTDEKGREDFSLADYQCLPPKSQDQDDIKNQQPASFMREERVREELPLDYHQYVVPKIQDQDSPREQNKHIKLPSSFEKWEIARGNTPGVPLAYDRYQSGLSTEFQAPLAFQSDVDKEEDKKERQKQYLRHRRLFMDIEREQVKEQQRQKEQKKKIEKIKKKREQECYAAEQRILRMNFHEDPYSGEKLSEILAQLQLQEIKGTREKQQREKEYLRYVEALRAQIQEKMQLYNITLPPLCCCGPDFWDAHPDTCANNCIFYKNHRAYTRALHSFINSCDVPGGNSTLRVAIHNFASAHRRTLKNL.

Coiled-coil stretches lie at residues 64–89, 154–193, 782–813, and 839–874; these read LIEE…QVKY, DGIE…VIKK, MDIE…EQEC, and LAQL…IQEK.

In terms of assembly, interacts with POC5, POC1B, CETN2 and FAM161A.

The protein localises to the cytoplasm. It localises to the cytoskeleton. It is found in the microtubule organizing center. The protein resides in the centrosome. Its subcellular location is the centriole. The protein localises to the centriolar satellite. In terms of biological role, plays an important role in primary cilium assembly, maintenance, and length regulation. Interacts with centriole inner scaffold proteins to promote proper centriole size and integrity and assembly of functional cilia. Required for the recruitment of both the inner scaffold protein POC1B and the distal SFI1/CETN2 complex to centrioles. This chain is Coiled-coil domain-containing protein 15 (CCDC15), found in Homo sapiens (Human).